Consider the following 102-residue polypeptide: Class II hydrophobin 3 (102 aa).

A signal peptide spans 1-16 (MQFLAVAALLFTTALA). 4 disulfides stabilise this stretch: cysteine 33–cysteine 83, cysteine 44–cysteine 74, cysteine 45–cysteine 57, and cysteine 84–cysteine 95.

This sequence belongs to the cerato-ulmin hydrophobin family. As to quaternary structure, homotetramer. Further self-assembles to form highly ordered films at water-air interfaces through intermolecular interactions. Expressed in the conidia, vegetative growth and induction growth stages.

The protein resides in the secreted. It is found in the cell wall. The protein localises to the cytoplasm. Aerial growth, conidiation, and dispersal of filamentous fungi in the environment rely upon a capability of their secreting small amphipathic proteins called hydrophobins (HPBs) with low sequence identity. Class I can self-assemble into an outermost layer of rodlet bundles on aerial cell surfaces, conferring cellular hydrophobicity that supports fungal growth, development and dispersal; whereas Class II form highly ordered films at water-air interfaces through intermolecular interactions but contribute nothing to the rodlet structure. Hbf3 is a class II hydrophobin that has a role in vegetative growth and asexual development. The polypeptide is Class II hydrophobin 3 (Hypocrea jecorina (strain QM6a) (Trichoderma reesei)).